Here is a 211-residue protein sequence, read N- to C-terminus: Outer-membrane lipoprotein carrier protein (211 aa).

The signal sequence occupies residues 1 to 24; the sequence is MNTIKILIGLLGIFLFSLSGIVSA.

The protein belongs to the LolA family. As to quaternary structure, monomer.

The protein localises to the periplasm. In terms of biological role, participates in the translocation of lipoproteins from the inner membrane to the outer membrane. Only forms a complex with a lipoprotein if the residue after the N-terminal Cys is not an aspartate (The Asp acts as a targeting signal to indicate that the lipoprotein should stay in the inner membrane). The protein is Outer-membrane lipoprotein carrier protein of Coxiella burnetii (strain CbuK_Q154) (Coxiella burnetii (strain Q154)).